The primary structure comprises 521 residues: Importin subunit alpha-4 (521 aa).

The segment at 1 to 29 is disordered; that stretch reads MAENPSLENHRIKSFKNKGRDVETMRRHR. Ala-2 is subject to N-acetylalanine. The IBB domain maps to 2–58; it reads AENPSLENHRIKSFKNKGRDVETMRRHRNEVTVELRKNKRDEHLLKKRNVPQEESLE. The segment covering 18-29 has biased composition (basic and acidic residues); the sequence is KGRDVETMRRHR. The Nuclear localization signal motif lies at 43–52; it reads EHLLKKRNVP. Residues Ser-56 and Ser-60 each carry the phosphoserine modification. Residues 66–106 form an ARM 1; truncated repeat; it reads FKAQNVTLEAILQNATSDNPVVQLSAVQAARKLLSSDRNPP. ARM repeat units lie at residues 107 to 149, 150 to 194, 195 to 233, 234 to 278, 279 to 318, 319 to 360, 361 to 400, and 401 to 443; these read IDDL…TSAQ, TQAV…CRDY, VISL…NKDP, PPPM…EQIQ, MVID…TDEQ, TQVV…NQQQ, VQAV…ISGR, and KDQV…IMAG. Positions 137–229 are NLS binding site (major); it reads WALTNIASGT…VTWVIVNLCR (93 aa). The tract at residues 306-394 is NLS binding site (minor); that stretch reads RAVGNIVTGT…QKEAAWAISN (89 aa). The stretch at 447–485 is one ARM 10; atypical repeat; that stretch reads STIAEIIEECGGLEKIEVLQQHENEDIYKLAFEIIDQYF. Tyr-484 carries the post-translational modification Phosphotyrosine.

Belongs to the importin alpha family. In terms of assembly, forms a complex with importin subunit beta-1. Interacts with DDX21. Interacts with NCBP1, NCBP2/CBP20 and NCBP3. Interacts with RCC1. Interacts with ZC3H11A. As to quaternary structure, (Microbial infection) Interacts with HIV-1 integrase; this interaction might play a role in nuclear import of HIV pre-integration complex. (Microbial infection) Interacts with influenza virus nucleoprotein; this interaction might play a role in nuclear import of viral genome. In terms of tissue distribution, ubiquitous. Highest levels in heart and skeletal muscle.

It localises to the cytoplasm. The protein localises to the nucleus. In terms of biological role, functions in nuclear protein import as an adapter protein for nuclear receptor KPNB1. Binds specifically and directly to substrates containing either a simple or bipartite NLS motif. Docking of the importin/substrate complex to the nuclear pore complex (NPC) is mediated by KPNB1 through binding to nucleoporin FxFG repeats and the complex is subsequently translocated through the pore by an energy requiring, Ran-dependent mechanism. At the nucleoplasmic side of the NPC, Ran binds to importin-beta and the three components separate and importin-alpha and -beta are re-exported from the nucleus to the cytoplasm where GTP hydrolysis releases Ran from importin. The directionality of nuclear import is thought to be conferred by an asymmetric distribution of the GTP- and GDP-bound forms of Ran between the cytoplasm and nucleus. In vitro, mediates the nuclear import of human cytomegalovirus UL84 by recognizing a non-classical NLS. Recognizes NLSs of influenza A virus nucleoprotein probably through ARM repeats 7-9. The chain is Importin subunit alpha-4 (KPNA3) from Homo sapiens (Human).